The following is a 1758-amino-acid chain: uncharacterized protein (1758 aa).

Residues 1–12 (MCFFLGSRLAYA) form the signal peptide. In terms of domain architecture, Autotransporter spans 1465–1758 (ENLYNNGMWI…SFILGGNYYF (294 aa)).

Its subcellular location is the cell outer membrane. This is an uncharacterized protein from Escherichia coli (strain K12).